The primary structure comprises 302 residues: NAD kinase 2 (302 aa).

The Proton acceptor role is filled by Asp78. Residues 78-79 (DG), 152-153 (NE), Asp182, and 193-198 (TAYSLS) contribute to the NAD(+) site.

This sequence belongs to the NAD kinase family. A divalent metal cation serves as cofactor.

Its subcellular location is the cytoplasm. It catalyses the reaction NAD(+) + ATP = ADP + NADP(+) + H(+). Its function is as follows. Involved in the regulation of the intracellular balance of NAD and NADP, and is a key enzyme in the biosynthesis of NADP. Catalyzes specifically the phosphorylation on 2'-hydroxyl of the adenosine moiety of NAD to yield NADP. The polypeptide is NAD kinase 2 (Prochlorococcus marinus (strain NATL2A)).